Here is a 1010-residue protein sequence, read N- to C-terminus: Antigenic heat-stable 120 kDa protein (1010 aa).

2 disordered regions span residues 1 to 34 (DTSEFDPLANKEYTEEQKQTLEQEQKEFLSQTTT) and 347 to 396 (GQSK…QSQQ). A compositionally biased stretch (basic and acidic residues) spans 12–27 (EYTEEQKQTLEQEQKE). Composition is skewed to polar residues over residues 347–372 (GQSKEQPLITPQQTTSSSVEPPQHKQ) and 379–396 (PTNQPLQPETSQMPQSQQ).

Its subcellular location is the cytoplasm. The sequence is that of Antigenic heat-stable 120 kDa protein (sca4) from Rickettsia parkeri.